We begin with the raw amino-acid sequence, 121 residues long: Nitrogen fixation nifHD region GlnB-like protein 2 (121 aa).

It belongs to the P(II) protein family.

In terms of biological role, could be involved in the regulation of nitrogen fixation. In Methanothermobacter marburgensis (strain ATCC BAA-927 / DSM 2133 / JCM 14651 / NBRC 100331 / OCM 82 / Marburg) (Methanobacterium thermoautotrophicum), this protein is Nitrogen fixation nifHD region GlnB-like protein 2 (glnBB).